The sequence spans 452 residues: MAGYLRVVRSLCRASGSGSAWAPAALTAPNLQEQPRRHYADKRIKVAKPVVEMDGDEMTRIIWQFIKEKLILPHVDVQLKYFDLGLPNRDQTNDQVTIDSALATQKYSVAVKCATITPDEARVEEFKLKKMWKSPNGTIRNILGGTVFREPIICKNIPRLVPGWTKPITIGRHAHGDQYKATDFVVDRAGTFKVVFTPKDGSGPKEWEVYNFPAGGVGMGMYNTDESISGFAHSCFQYAIQKKWPLYMSTKNTILKAYDGRFKDIFQAIFEKHYKTEFDKHKIWYEHRLIDDMVAQVLKSSGGFVWACKNYDGDVQSDILAQGFGSLGLMTSVLVCPDGKTIEAEAAHGTVTRHYREHQKGRPTSTNPIASIFAWTRGLEHRGKLDGNQDLIRFAQTLEKVCVETVESGAMTKDLAGCIHGLSNVKLNEHFLNTSDFLDTIKSNLDRALGQQ.

The N-terminal 39 residues, 1–39 (MAGYLRVVRSLCRASGSGSAWAPAALTAPNLQEQPRRHY), are a transit peptide targeting the mitochondrion. N6-acetyllysine occurs at positions 45, 48, 67, and 69. An N6-acetyllysine; alternate mark is found at K80 and K106. N6-succinyllysine; alternate is present on residues K80 and K106. Residues 115–117 (TIT) and R122 each bind NADP(+). T117 provides a ligand contact to D-threo-isocitrate. D-threo-isocitrate contacts are provided by residues 134–140 (SPNGTIR) and R149. K155 bears the N6-acetyllysine mark. K166 carries the N6-acetyllysine; alternate modification. Position 166 is an N6-succinyllysine; alternate (K166). R172 is a binding site for D-threo-isocitrate. N6-acetyllysine; alternate is present on residues K180 and K193. 2 positions are modified to N6-succinyllysine; alternate: K180 and K193. At K199 the chain carries N6-acetyllysine. K256 is modified (N6-acetyllysine; alternate). K256 is modified (N6-succinyllysine; alternate). 4 positions are modified to N6-acetyllysine: K263, K272, K275, and K280. An N6-acetyllysine; alternate modification is found at K282. N6-succinyllysine; alternate is present on K282. Residue D291 participates in Mn(2+) binding. K299 lines the NADP(+) pocket. Residue D314 coordinates Mn(2+). Residues 349–354 (GTVTRH) and N367 each bind NADP(+). K384 bears the N6-acetyllysine; alternate mark. N6-succinyllysine; alternate is present on K384. An N6-acetyllysine mark is found at K400, K413, and K442.

The protein belongs to the isocitrate and isopropylmalate dehydrogenases family. Homodimer. Mg(2+) is required as a cofactor. Requires Mn(2+) as cofactor. Post-translationally, acetylation at Lys-413 dramatically reduces catalytic activity. Deacetylated by SIRT3.

The protein localises to the mitochondrion. The enzyme catalyses D-threo-isocitrate + NADP(+) = 2-oxoglutarate + CO2 + NADPH. In terms of biological role, plays a role in intermediary metabolism and energy production. It may tightly associate or interact with the pyruvate dehydrogenase complex. The protein is Isocitrate dehydrogenase [NADP], mitochondrial (IDH2) of Bos taurus (Bovine).